We begin with the raw amino-acid sequence, 717 residues long: Polyribonucleotide nucleotidyltransferase (717 aa).

Residues Asp-496 and Asp-502 each contribute to the Mg(2+) site. The KH domain maps to 563-622; that stretch reads PRLLTIKIDPDLIGLVIGPGGKTVKGITEQTGTKIDIDDDGTVTISSTDGEQAEKAKRLI. The S1 motif domain maps to 632 to 700; sequence GEVYLGRVTR…SKGRLNLTRL (69 aa).

Belongs to the polyribonucleotide nucleotidyltransferase family. It depends on Mg(2+) as a cofactor.

The protein resides in the cytoplasm. It carries out the reaction RNA(n+1) + phosphate = RNA(n) + a ribonucleoside 5'-diphosphate. Involved in mRNA degradation. Catalyzes the phosphorolysis of single-stranded polyribonucleotides processively in the 3'- to 5'-direction. This chain is Polyribonucleotide nucleotidyltransferase, found in Microcystis aeruginosa (strain NIES-843 / IAM M-2473).